Reading from the N-terminus, the 186-residue chain is Peptide deformylase (186 aa).

C113 and H157 together coordinate Fe cation. E158 is a catalytic residue. H161 provides a ligand contact to Fe cation.

It belongs to the polypeptide deformylase family. Requires Fe(2+) as cofactor.

The catalysed reaction is N-terminal N-formyl-L-methionyl-[peptide] + H2O = N-terminal L-methionyl-[peptide] + formate. Functionally, removes the formyl group from the N-terminal Met of newly synthesized proteins. Requires at least a dipeptide for an efficient rate of reaction. N-terminal L-methionine is a prerequisite for activity but the enzyme has broad specificity at other positions. The polypeptide is Peptide deformylase (Malacoplasma penetrans (strain HF-2) (Mycoplasma penetrans)).